Reading from the N-terminus, the 263-residue chain is Ribosomal RNA small subunit methyltransferase A (263 aa).

The S-adenosyl-L-methionine site is built by N13, T15, G40, E61, D85, and N105.

The protein belongs to the class I-like SAM-binding methyltransferase superfamily. rRNA adenine N(6)-methyltransferase family. RsmA subfamily.

The protein localises to the cytoplasm. The catalysed reaction is adenosine(1518)/adenosine(1519) in 16S rRNA + 4 S-adenosyl-L-methionine = N(6)-dimethyladenosine(1518)/N(6)-dimethyladenosine(1519) in 16S rRNA + 4 S-adenosyl-L-homocysteine + 4 H(+). Specifically dimethylates two adjacent adenosines (A1518 and A1519) in the loop of a conserved hairpin near the 3'-end of 16S rRNA in the 30S particle. May play a critical role in biogenesis of 30S subunits. The polypeptide is Ribosomal RNA small subunit methyltransferase A (Mycoplasma pneumoniae (strain ATCC 29342 / M129 / Subtype 1) (Mycoplasmoides pneumoniae)).